A 278-amino-acid polypeptide reads, in one-letter code: MAVAYADKPNHFINFPLTQFQGFVLNYKGLQFQLLDEGVDCKIQTAPHISLAMLDIQPEDYRSVDVAIQEVIDDMHWGEGFQIKFENPHILGRCIVLDVKGVEELHDDLVNYIRDKGCVADQSRKWIGHCTIAQLTDAALSIKENVDFINSMQFNYKITINPSSPARLEIVKLGAEKKDGFYETIASHWMGIRFEYNPPTDKLAMIMGYCCSEVVRKELEEGDLPENDDDAWFKLSYHYENNSWFFRHVYRKSSYFRKSCQNLDCNCLGFYESSVEED.

Belongs to the coronaviruses ns2a protein family.

This chain is Non-structural protein 2a, found in Bovine coronavirus (strain LSU-94LSS-051) (BCoV-LSU).